Here is a 287-residue protein sequence, read N- to C-terminus: ATP synthase gamma chain (287 aa).

This sequence belongs to the ATPase gamma chain family. In terms of assembly, F-type ATPases have 2 components, CF(1) - the catalytic core - and CF(0) - the membrane proton channel. CF(1) has five subunits: alpha(3), beta(3), gamma(1), delta(1), epsilon(1). CF(0) has three main subunits: a, b and c.

It localises to the cell inner membrane. Functionally, produces ATP from ADP in the presence of a proton gradient across the membrane. The gamma chain is believed to be important in regulating ATPase activity and the flow of protons through the CF(0) complex. The sequence is that of ATP synthase gamma chain from Marinobacter nauticus (strain ATCC 700491 / DSM 11845 / VT8) (Marinobacter aquaeolei).